Here is a 127-residue protein sequence, read N- to C-terminus: Large ribosomal subunit protein bL21 (127 aa).

It belongs to the bacterial ribosomal protein bL21 family. Part of the 50S ribosomal subunit. Contacts protein L20.

Its function is as follows. This protein binds to 23S rRNA in the presence of protein L20. The protein is Large ribosomal subunit protein bL21 of Synechococcus elongatus (strain ATCC 33912 / PCC 7942 / FACHB-805) (Anacystis nidulans R2).